The chain runs to 524 residues: Alkaline phosphatase, tissue-nonspecific isozyme (524 aa).

An N-terminal signal peptide occupies residues 1-17; it reads MISPFLLLAIGTCFASS. D60 contributes to the Mg(2+) binding site. The Zn(2+) site is built by D60 and S110. Catalysis depends on S110, which acts as the Phosphoserine intermediate. Residue S110 is modified to Phosphoserine. A disulfide bridge links C139 with C201. N-linked (GlcNAc...) asparagine glycosylation occurs at N140. T173 is a Mg(2+) binding site. N230 carries N-linked (GlcNAc...) asparagine glycosylation. Ca(2+) is bound at residue E235. Residue N271 is glycosylated (N-linked (GlcNAc...) asparagine). Ca(2+) is bound by residues F290 and E291. N-linked (GlcNAc...) asparagine glycosylation is present at N303. D306 is a binding site for Ca(2+). Mg(2+) is bound at residue E332. D337, H341, D378, and H379 together coordinate Zn(2+). The N-linked (GlcNAc...) asparagine glycan is linked to N430. H454 serves as a coordination point for Zn(2+). C489 and C497 are disulfide-bonded. S499 is lipidated: GPI-anchor amidated serine. Positions 500 to 524 are cleaved as a propeptide — removed in mature form; it reads ASSSGSPSPGPLLLLLALLPLGSLF.

Belongs to the alkaline phosphatase family. In terms of assembly, homodimer. Requires Mg(2+) as cofactor. Zn(2+) is required as a cofactor. It depends on Ca(2+) as a cofactor. N-glycosylated.

It localises to the cell membrane. The protein localises to the extracellular vesicle membrane. It is found in the mitochondrion membrane. Its subcellular location is the mitochondrion intermembrane space. It catalyses the reaction a phosphate monoester + H2O = an alcohol + phosphate. The catalysed reaction is diphosphate + H2O = 2 phosphate + H(+). The enzyme catalyses pyridoxal 5'-phosphate + H2O = pyridoxal + phosphate. It carries out the reaction phosphoethanolamine + H2O = ethanolamine + phosphate. It catalyses the reaction N-phosphocreatine + H2O = creatine + phosphate. The catalysed reaction is ATP + H2O = ADP + phosphate + H(+). The enzyme catalyses ADP + H2O = AMP + phosphate + H(+). It carries out the reaction AMP + H2O = adenosine + phosphate. With respect to regulation, phosphatase activity is specifically inhibited by 5-((5-chloro-2-methoxyphenyl)sulfonamido)nicotinamide (SBI-425). Its function is as follows. Alkaline phosphatase that metabolizes various phosphate compounds and plays a key role in skeletal mineralization and adaptive thermogenesis. Has broad substrate specificity and can hydrolyze a considerable variety of compounds: however, only a few substrates, such as diphosphate (inorganic pyrophosphate; PPi), pyridoxal 5'-phosphate (PLP) and N-phosphocreatine are natural substrates. Plays an essential role in skeletal and dental mineralization via its ability to hydrolyze extracellular diphosphate, a potent mineralization inhibitor, to phosphate: it thereby promotes hydroxyapatite crystal formation and increases inorganic phosphate concentration. Acts in a non-redundant manner with PHOSPHO1 in skeletal mineralization: while PHOSPHO1 mediates the initiation of hydroxyapatite crystallization in the matrix vesicles (MVs), ALPL/TNAP catalyzes the spread of hydroxyapatite crystallization in the extracellular matrix. Also promotes dephosphorylation of osteopontin (SSP1), an inhibitor of hydroxyapatite crystallization in its phosphorylated state; it is however unclear whether ALPL/TNAP mediates SSP1 dephosphorylation via a direct or indirect manner. Catalyzes dephosphorylation of PLP to pyridoxal (PL), the transportable form of vitamin B6, in order to provide a sufficient amount of PLP in the brain, an essential cofactor for enzymes catalyzing the synthesis of diverse neurotransmitters. Additionally, also able to mediate ATP degradation in a stepwise manner to adenosine, thereby regulating the availability of ligands for purinergic receptors. Also capable of dephosphorylating microbial products, such as lipopolysaccharides (LPS) as well as other phosphorylated small-molecules, such as poly-inosine:cytosine (poly I:C). Acts as a key regulator of adaptive thermogenesis as part of the futile creatine cycle: localizes to the mitochondria of thermogenic fat cells and acts by mediating hydrolysis of N-phosphocreatine to initiate a futile cycle of creatine dephosphorylation and phosphorylation. During the futile creatine cycle, creatine and N-phosphocreatine are in a futile cycle, which dissipates the high energy charge of N-phosphocreatine as heat without performing any mechanical or chemical work. This is Alkaline phosphatase, tissue-nonspecific isozyme (ALPL) from Bos taurus (Bovine).